A 171-amino-acid polypeptide reads, in one-letter code: Putative pre-16S rRNA nuclease (171 aa).

This sequence belongs to the YqgF nuclease family.

It localises to the cytoplasm. Functionally, could be a nuclease involved in processing of the 5'-end of pre-16S rRNA. The protein is Putative pre-16S rRNA nuclease of Corynebacterium diphtheriae (strain ATCC 700971 / NCTC 13129 / Biotype gravis).